The primary structure comprises 277 residues: Shikimate dehydrogenase (NADP(+)) (277 aa).

Residues S15 to S17 and T62 contribute to the shikimate site. K66 serves as the catalytic Proton acceptor. Residues N87 and D102 each coordinate shikimate. Residues G127–A131, N151–K156, and I219 each bind NADP(+). Position 221 (Y221) interacts with shikimate. G242 is a binding site for NADP(+).

Belongs to the shikimate dehydrogenase family. As to quaternary structure, homodimer.

The enzyme catalyses shikimate + NADP(+) = 3-dehydroshikimate + NADPH + H(+). Its pathway is metabolic intermediate biosynthesis; chorismate biosynthesis; chorismate from D-erythrose 4-phosphate and phosphoenolpyruvate: step 4/7. Functionally, involved in the biosynthesis of the chorismate, which leads to the biosynthesis of aromatic amino acids. Catalyzes the reversible NADPH linked reduction of 3-dehydroshikimate (DHSA) to yield shikimate (SA). This is Shikimate dehydrogenase (NADP(+)) from Bacillus cereus (strain B4264).